Consider the following 693-residue polypeptide: Elongation factor G (693 aa).

In terms of domain architecture, tr-type G spans 8–282 (EKTRNIGIMA…AVIDYLPSPL (275 aa)). GTP contacts are provided by residues 17 to 24 (AHVDAGKT), 81 to 85 (DTPGH), and 135 to 138 (NKMD).

Belongs to the TRAFAC class translation factor GTPase superfamily. Classic translation factor GTPase family. EF-G/EF-2 subfamily.

Its subcellular location is the cytoplasm. Its function is as follows. Catalyzes the GTP-dependent ribosomal translocation step during translation elongation. During this step, the ribosome changes from the pre-translocational (PRE) to the post-translocational (POST) state as the newly formed A-site-bound peptidyl-tRNA and P-site-bound deacylated tRNA move to the P and E sites, respectively. Catalyzes the coordinated movement of the two tRNA molecules, the mRNA and conformational changes in the ribosome. This Streptococcus pneumoniae serotype 2 (strain D39 / NCTC 7466) protein is Elongation factor G.